Reading from the N-terminus, the 221-residue chain is Thiamine-phosphate synthase (221 aa).

4-amino-2-methyl-5-(diphosphooxymethyl)pyrimidine contacts are provided by residues 46–50 and asparagine 83; that span reads QFREK. Residues aspartate 84 and aspartate 103 each contribute to the Mg(2+) site. Serine 122 serves as a coordination point for 4-amino-2-methyl-5-(diphosphooxymethyl)pyrimidine. 2-[(2R,5Z)-2-carboxy-4-methylthiazol-5(2H)-ylidene]ethyl phosphate is bound at residue 149-151; it reads TQS. Residue lysine 152 participates in 4-amino-2-methyl-5-(diphosphooxymethyl)pyrimidine binding. 2-[(2R,5Z)-2-carboxy-4-methylthiazol-5(2H)-ylidene]ethyl phosphate-binding positions include glycine 181 and 201 to 202; that span reads IS.

Belongs to the thiamine-phosphate synthase family. Mg(2+) is required as a cofactor.

It carries out the reaction 2-[(2R,5Z)-2-carboxy-4-methylthiazol-5(2H)-ylidene]ethyl phosphate + 4-amino-2-methyl-5-(diphosphooxymethyl)pyrimidine + 2 H(+) = thiamine phosphate + CO2 + diphosphate. The catalysed reaction is 2-(2-carboxy-4-methylthiazol-5-yl)ethyl phosphate + 4-amino-2-methyl-5-(diphosphooxymethyl)pyrimidine + 2 H(+) = thiamine phosphate + CO2 + diphosphate. The enzyme catalyses 4-methyl-5-(2-phosphooxyethyl)-thiazole + 4-amino-2-methyl-5-(diphosphooxymethyl)pyrimidine + H(+) = thiamine phosphate + diphosphate. It functions in the pathway cofactor biosynthesis; thiamine diphosphate biosynthesis; thiamine phosphate from 4-amino-2-methyl-5-diphosphomethylpyrimidine and 4-methyl-5-(2-phosphoethyl)-thiazole: step 1/1. Functionally, condenses 4-methyl-5-(beta-hydroxyethyl)thiazole monophosphate (THZ-P) and 2-methyl-4-amino-5-hydroxymethyl pyrimidine pyrophosphate (HMP-PP) to form thiamine monophosphate (TMP). This is Thiamine-phosphate synthase from Actinobacillus succinogenes (strain ATCC 55618 / DSM 22257 / CCUG 43843 / 130Z).